The primary structure comprises 478 residues: Transcript termination protein A18 (478 aa).

In terms of domain architecture, Helicase ATP-binding spans Lys-98–Ser-254. Position 111 to 118 (Leu-111 to Thr-118) interacts with ATP. A DESH box motif is present at residues Asp-204 to His-207. Residues Ile-307–Gly-454 form the Helicase C-terminal domain.

Belongs to the helicase family. Poxviruses subfamily. As to quaternary structure, interacts with G2. Might be part of a transcription complex composed at least of G2, A18, and H5.

The protein resides in the virion. Its function is as follows. DNA helicase which seems to act as a postreplicative transcription termination factor. Involved in ATP-dependent release of nascent RNA. Forms a stable complex with single-stranded DNA, and to a lesser extent RNA. In Erythrocebus patas (Red guenon), this protein is Transcript termination protein A18.